Reading from the N-terminus, the 435-residue chain is Eukaryotic peptide chain release factor subunit 1 (435 aa).

The protein belongs to the eukaryotic release factor 1 family. In terms of assembly, heterodimer of two subunits, one of which binds GTP.

The protein localises to the cytoplasm. In terms of biological role, directs the termination of nascent peptide synthesis (translation) in response to the termination codon UGA. In T.thermophila UAA and UAG codes for glutamine. The chain is Eukaryotic peptide chain release factor subunit 1 (ERF1) from Tetrahymena thermophila.